Consider the following 363-residue polypeptide: tRNA/tmRNA (uracil-C(5))-methyltransferase (363 aa).

5 residues coordinate S-adenosyl-L-methionine: Gln187, Tyr215, Asn220, Glu236, and Asp296. Cys321 serves as the catalytic Nucleophile. The Proton acceptor role is filled by Glu355.

This sequence belongs to the class I-like SAM-binding methyltransferase superfamily. RNA M5U methyltransferase family. TrmA subfamily.

The enzyme catalyses uridine(54) in tRNA + S-adenosyl-L-methionine = 5-methyluridine(54) in tRNA + S-adenosyl-L-homocysteine + H(+). It catalyses the reaction uridine(341) in tmRNA + S-adenosyl-L-methionine = 5-methyluridine(341) in tmRNA + S-adenosyl-L-homocysteine + H(+). Functionally, dual-specificity methyltransferase that catalyzes the formation of 5-methyluridine at position 54 (m5U54) in all tRNAs, and that of position 341 (m5U341) in tmRNA (transfer-mRNA). The sequence is that of tRNA/tmRNA (uracil-C(5))-methyltransferase from Pseudomonas aeruginosa (strain ATCC 15692 / DSM 22644 / CIP 104116 / JCM 14847 / LMG 12228 / 1C / PRS 101 / PAO1).